The sequence spans 397 residues: Alanine racemase, biosynthetic (397 aa).

Lys42 serves as the catalytic Proton acceptor; specific for D-alanine. At Lys42 the chain carries N6-(pyridoxal phosphate)lysine. Arg136 is a substrate binding site. Tyr257 serves as the catalytic Proton acceptor; specific for L-alanine. Residue Met305 coordinates substrate. A disordered region spans residues 373–397 (ANRPTEAMSNPSRAKSRPMDKQALI).

The protein belongs to the alanine racemase family. Requires pyridoxal 5'-phosphate as cofactor.

The catalysed reaction is L-alanine = D-alanine. The protein operates within amino-acid biosynthesis; D-alanine biosynthesis; D-alanine from L-alanine: step 1/1. Its pathway is cell wall biogenesis; peptidoglycan biosynthesis. Its function is as follows. Catalyzes the interconversion of L-alanine and D-alanine. Provides the D-alanine required for cell wall biosynthesis. This is Alanine racemase, biosynthetic (alr) from Mesorhizobium japonicum (strain LMG 29417 / CECT 9101 / MAFF 303099) (Mesorhizobium loti (strain MAFF 303099)).